Consider the following 330-residue polypeptide: DNA-directed RNA polymerase subunit alpha (330 aa).

The interval 1–231 (MALFNFQKPD…IHHFMLFSDE (231 aa)) is alpha N-terminal domain (alpha-NTD). The interval 253-330 (MRQLLKTKLV…DLAKYKLDKE (78 aa)) is alpha C-terminal domain (alpha-CTD).

It belongs to the RNA polymerase alpha chain family. As to quaternary structure, homodimer. The RNAP catalytic core consists of 2 alpha, 1 beta, 1 beta' and 1 omega subunit. When a sigma factor is associated with the core the holoenzyme is formed, which can initiate transcription.

It carries out the reaction RNA(n) + a ribonucleoside 5'-triphosphate = RNA(n+1) + diphosphate. Its function is as follows. DNA-dependent RNA polymerase catalyzes the transcription of DNA into RNA using the four ribonucleoside triphosphates as substrates. The protein is DNA-directed RNA polymerase subunit alpha of Flavobacterium psychrophilum (strain ATCC 49511 / DSM 21280 / CIP 103535 / JIP02/86).